Consider the following 297-residue polypeptide: Phosphoribosylaminoimidazole-succinocarboxamide synthase (297 aa).

The protein belongs to the SAICAR synthetase family.

The catalysed reaction is 5-amino-1-(5-phospho-D-ribosyl)imidazole-4-carboxylate + L-aspartate + ATP = (2S)-2-[5-amino-1-(5-phospho-beta-D-ribosyl)imidazole-4-carboxamido]succinate + ADP + phosphate + 2 H(+). It participates in purine metabolism; IMP biosynthesis via de novo pathway; 5-amino-1-(5-phospho-D-ribosyl)imidazole-4-carboxamide from 5-amino-1-(5-phospho-D-ribosyl)imidazole-4-carboxylate: step 1/2. The polypeptide is Phosphoribosylaminoimidazole-succinocarboxamide synthase (Methylobacillus flagellatus (strain ATCC 51484 / DSM 6875 / VKM B-1610 / KT)).